The chain runs to 476 residues: Proline--tRNA ligase 2 (476 aa).

Belongs to the class-II aminoacyl-tRNA synthetase family. ProS type 3 subfamily. Homodimer.

It is found in the cytoplasm. It catalyses the reaction tRNA(Pro) + L-proline + ATP = L-prolyl-tRNA(Pro) + AMP + diphosphate. Catalyzes the attachment of proline to tRNA(Pro) in a two-step reaction: proline is first activated by ATP to form Pro-AMP and then transferred to the acceptor end of tRNA(Pro). The protein is Proline--tRNA ligase 2 of Bacillus thuringiensis (strain Al Hakam).